A 931-amino-acid chain; its full sequence is Bifunctional uridylyltransferase/uridylyl-removing enzyme (931 aa).

The tract at residues 1 to 383 (MDLATTNDAA…RPGTELRRVP (383 aa)) is uridylyltransferase. The tract at residues 384 to 739 (EGDDFIIDNN…VGFDEARGVT (356 aa)) is uridylyl-removing. Residues 499-622 (VDEHLLRCIG…VQSVEQMKLL (124 aa)) form the HD domain. 2 ACT domains span residues 740–822 (ELTI…VVAR) and 851–931 (VIEV…QSVG).

This sequence belongs to the GlnD family. Requires Mg(2+) as cofactor.

It catalyses the reaction [protein-PII]-L-tyrosine + UTP = [protein-PII]-uridylyl-L-tyrosine + diphosphate. It carries out the reaction [protein-PII]-uridylyl-L-tyrosine + H2O = [protein-PII]-L-tyrosine + UMP + H(+). With respect to regulation, uridylyltransferase (UTase) activity is inhibited by glutamine, while glutamine activates uridylyl-removing (UR) activity. Modifies, by uridylylation and deuridylylation, the PII regulatory proteins (GlnB and homologs), in response to the nitrogen status of the cell that GlnD senses through the glutamine level. Under low glutamine levels, catalyzes the conversion of the PII proteins and UTP to PII-UMP and PPi, while under higher glutamine levels, GlnD hydrolyzes PII-UMP to PII and UMP (deuridylylation). Thus, controls uridylylation state and activity of the PII proteins, and plays an important role in the regulation of nitrogen assimilation and metabolism. This chain is Bifunctional uridylyltransferase/uridylyl-removing enzyme, found in Nitrobacter hamburgensis (strain DSM 10229 / NCIMB 13809 / X14).